We begin with the raw amino-acid sequence, 402 residues long: Sulfate adenylyltransferase (402 aa).

The protein belongs to the sulfate adenylyltransferase family.

The catalysed reaction is sulfate + ATP + H(+) = adenosine 5'-phosphosulfate + diphosphate. It participates in sulfur metabolism; hydrogen sulfide biosynthesis; sulfite from sulfate: step 1/3. The chain is Sulfate adenylyltransferase from Vesicomyosocius okutanii subsp. Calyptogena okutanii (strain HA).